A 1012-amino-acid chain; its full sequence is Roundabout homolog 4 (1012 aa).

Residues 1 to 27 (MGSGGTGLLGTEWPLPLLLLFIMGGEA) form the signal peptide. 2 consecutive Ig-like C2-type domains span residues 32-132 (PQIL…ARLS) and 138-225 (EDFQ…ARVS). Disulfide bonds link cysteine 53–cysteine 115 and cysteine 159–cysteine 208. N-linked (GlcNAc...) asparagine glycosylation is found at asparagine 201 and asparagine 247. 2 Fibronectin type-III domains span residues 249 to 346 (TLLN…LPEQ) and 348 to 443 (PSAP…LEQA). Asparagine 361, asparagine 390, and asparagine 397 each carry an N-linked (GlcNAc...) asparagine glycan. Disordered stretches follow at residues 533 to 553 (TSGSRDLSSSSSLSSRLGLDP) and 586 to 616 (LIAEQPSSPPVRPSPKTPAARRFPSKLAGTS). The segment covering 534 to 550 (SGSRDLSSSSSLSSRLG) has biased composition (low complexity). A compositionally biased stretch (pro residues) spans 592-601 (SSPPVRPSPK). N-linked (GlcNAc...) asparagine glycosylation is found at asparagine 681 and asparagine 713. Positions 711–801 (HRNSSELASR…LEEEEDQDSV (91 aa)) are disordered. Positions 745–759 (LQAPSSDPLPAAPLS) are enriched in low complexity. Positions 760–771 (VLNSSRPSSPQA) are enriched in polar residues. Residues asparagine 762 and asparagine 783 are each glycosylated (N-linked (GlcNAc...) asparagine). Residues 772-791 (SFLSCPSPSSSNLSSSSLSS) show a composition bias toward low complexity. A phosphoserine mark is found at serine 814 and serine 947. Residues 980-1012 (RLGRGLPPWPPDSRASSQRSWLTGAVPKAGDSS) are disordered.

The protein belongs to the immunoglobulin superfamily. ROBO family. Interacts with SLIT2 and ENAH. As to expression, expressed specifically in embryo and adult vascular endothelium.

Functionally, receptor for Slit proteins, at least for SLIT2, and seems to be involved in angiogenesis and vascular patterning. May mediate the inhibition of primary endothelial cell migration by Slit proteins. Involved in the maintenance of endothelial barrier organization and function. The sequence is that of Roundabout homolog 4 (Robo4) from Mus musculus (Mouse).